Reading from the N-terminus, the 131-residue chain is Small ribosomal subunit protein uS8 (131 aa).

The protein belongs to the universal ribosomal protein uS8 family. As to quaternary structure, part of the 30S ribosomal subunit. Contacts proteins S5 and S12.

One of the primary rRNA binding proteins, it binds directly to 16S rRNA central domain where it helps coordinate assembly of the platform of the 30S subunit. The chain is Small ribosomal subunit protein uS8 from Burkholderia mallei (strain NCTC 10247).